The chain runs to 284 residues: RNase adapter protein RapZ (284 aa).

8 to 15 contacts ATP; it reads GRSGSGKS. 56 to 59 lines the GTP pocket; that stretch reads DVRN. The tract at residues 266–284 is RNA-binding; the sequence is RARGKNVQSRHRTLEKRKQ.

It belongs to the RapZ-like family. RapZ subfamily. In terms of assembly, homotrimer.

In terms of biological role, modulates the synthesis of GlmS, by affecting the processing and stability of the regulatory small RNA GlmZ. When glucosamine-6-phosphate (GlcN6P) concentrations are high in the cell, RapZ binds GlmZ and targets it to cleavage by RNase E. Consequently, GlmZ is inactivated and unable to activate GlmS synthesis. Under low GlcN6P concentrations, RapZ is sequestered and inactivated by an other regulatory small RNA, GlmY, preventing GlmZ degradation and leading to synthesis of GlmS. This is RNase adapter protein RapZ from Yersinia pseudotuberculosis serotype O:1b (strain IP 31758).